Here is a 677-residue protein sequence, read N- to C-terminus: Protein windpipe (677 aa).

The N-terminal stretch at methionine 1 to alanine 20 is a signal peptide. At threonine 21–alanine 451 the chain is on the extracellular side. N-linked (GlcNAc...) asparagine glycosylation is found at asparagine 53 and asparagine 80. LRR repeat units follow at residues leucine 91–arginine 116, asparagine 118–proline 133, glutamine 134–methionine 156, and glutamine 158–valine 183. 2 N-linked (GlcNAc...) asparagine glycosylation sites follow: asparagine 145 and asparagine 170. Residues glutamate 184–lysine 216 enclose the LRRCT domain. Disordered stretches follow at residues alanine 264–leucine 285, threonine 298–serine 317, and lysine 325–serine 385. Positions serine 347–glutamate 372 are enriched in basic and acidic residues. The span at proline 374–serine 385 shows a compositional bias: polar residues. A helical membrane pass occupies residues isoleucine 452–isoleucine 472. The Cytoplasmic portion of the chain corresponds to lysine 473–histidine 677. 2 disordered regions span residues leucine 502–glutamate 523 and asparagine 539–histidine 677. Low complexity predominate over residues alanine 595–glutamate 607.

In terms of assembly, interacts with dome; the interaction promotes internalization of dome and its subsequent lysosomal degradation. As to expression, in adult intestine, expressed in both small progenitor cells and large nuclei enterocytes (at protein level). During embryogenesis, restricted to the developing trachea.

It is found in the cell membrane. Plays a role in negative regulation of the JAK/STAT pathway by binding to the receptor dome and promoting its internalization for subsequent lysosomal degradation, thereby reducing JAK/STAT signaling. This chain is Protein windpipe, found in Drosophila melanogaster (Fruit fly).